The following is a 283-amino-acid chain: Zinc-finger homeodomain protein 8 (283 aa).

The ZF-HD dimerization-type; degenerate zinc finger occupies 23–68 (YKECMRNHAAAMGGQAFDGCGEYMPASPDSLKCAACGCHRSFHRRA). Disordered stretches follow at residues 131–171 (AGRA…TKFT) and 244–283 (GLGTGLGTGISGDGDGDDDDTDDSPPRAAVSSPSPSPISV). Over residues 148–161 (GSAGGSGSGGGGIF) the composition is skewed to gly residues. Residues 163-226 (RKRFRTKFTP…NHKNQLASSP (64 aa)) constitute a DNA-binding region (homeobox). Residues 244 to 256 (GLGTGLGTGISGD) show a composition bias toward gly residues. The segment covering 257-266 (GDGDDDDTDD) has biased composition (acidic residues). Positions 269–283 (PRAAVSSPSPSPISV) are enriched in low complexity.

Homo- and heterodimer with other ZFHD proteins.

The protein resides in the nucleus. In terms of biological role, putative transcription factor. This chain is Zinc-finger homeodomain protein 8 (ZHD8), found in Oryza sativa subsp. japonica (Rice).